The chain runs to 411 residues: Serine hydroxymethyltransferase (411 aa).

Residues Leu113 and 117 to 119 (GHL) contribute to the (6S)-5,6,7,8-tetrahydrofolate site. The residue at position 222 (Lys222) is an N6-(pyridoxal phosphate)lysine. (6S)-5,6,7,8-tetrahydrofolate-binding positions include Glu238 and 346–348 (SPF).

The protein belongs to the SHMT family. In terms of assembly, homodimer. It depends on pyridoxal 5'-phosphate as a cofactor.

It is found in the cytoplasm. The catalysed reaction is (6R)-5,10-methylene-5,6,7,8-tetrahydrofolate + glycine + H2O = (6S)-5,6,7,8-tetrahydrofolate + L-serine. Its pathway is one-carbon metabolism; tetrahydrofolate interconversion. It participates in amino-acid biosynthesis; glycine biosynthesis; glycine from L-serine: step 1/1. In terms of biological role, catalyzes the reversible interconversion of serine and glycine with tetrahydrofolate (THF) serving as the one-carbon carrier. This reaction serves as the major source of one-carbon groups required for the biosynthesis of purines, thymidylate, methionine, and other important biomolecules. Also exhibits THF-independent aldolase activity toward beta-hydroxyamino acids, producing glycine and aldehydes, via a retro-aldol mechanism. This is Serine hydroxymethyltransferase from Prochlorococcus marinus (strain NATL1A).